The chain runs to 119 residues: Large ribosomal subunit protein bL20 (119 aa).

The protein belongs to the bacterial ribosomal protein bL20 family.

Functionally, binds directly to 23S ribosomal RNA and is necessary for the in vitro assembly process of the 50S ribosomal subunit. It is not involved in the protein synthesizing functions of that subunit. In Geobacillus stearothermophilus (Bacillus stearothermophilus), this protein is Large ribosomal subunit protein bL20 (rplT).